The chain runs to 182 residues: Small ribosomal subunit protein uS4c (182 aa).

Residues 82-143 enclose the S4 RNA-binding domain; sequence MRLDNILFRL…KERSKVLIQN (62 aa).

This sequence belongs to the universal ribosomal protein uS4 family. As to quaternary structure, part of the 30S ribosomal subunit. Contacts protein S5. The interaction surface between S4 and S5 is involved in control of translational fidelity.

The protein resides in the plastid. It localises to the chloroplast. Its function is as follows. One of the primary rRNA binding proteins, it binds directly to 16S rRNA where it nucleates assembly of the body of the 30S subunit. In terms of biological role, with S5 and S12 plays an important role in translational accuracy. The protein is Small ribosomal subunit protein uS4c (rps4) of Alophia veracruzana (Mexican pine woods lily).